We begin with the raw amino-acid sequence, 144 residues long: Small ribosomal subunit protein uS19 (144 aa).

It belongs to the universal ribosomal protein uS19 family.

Protein S19 forms a complex with S13 that binds strongly to the 16S ribosomal RNA. The protein is Small ribosomal subunit protein uS19 of Hyperthermus butylicus (strain DSM 5456 / JCM 9403 / PLM1-5).